The following is a 1284-amino-acid chain: DNA-directed RNA polymerase subunit beta (1284 aa).

The protein belongs to the RNA polymerase beta chain family. In terms of assembly, the RNAP catalytic core consists of 2 alpha, 1 beta, 1 beta' and 1 omega subunit. When a sigma factor is associated with the core the holoenzyme is formed, which can initiate transcription.

The catalysed reaction is RNA(n) + a ribonucleoside 5'-triphosphate = RNA(n+1) + diphosphate. Functionally, DNA-dependent RNA polymerase catalyzes the transcription of DNA into RNA using the four ribonucleoside triphosphates as substrates. This Mesoplasma florum (strain ATCC 33453 / NBRC 100688 / NCTC 11704 / L1) (Acholeplasma florum) protein is DNA-directed RNA polymerase subunit beta.